The sequence spans 384 residues: Galactokinase (384 aa).

Position 35–38 (35–38 (EHTD)) interacts with substrate. Residues S69 and 125 to 131 (GAGLSSS) contribute to the ATP site. Mg(2+) is bound by residues S131 and E163. The active-site Proton acceptor is the D175. Y224 serves as a coordination point for substrate.

Belongs to the GHMP kinase family. GalK subfamily.

The protein resides in the cytoplasm. It catalyses the reaction alpha-D-galactose + ATP = alpha-D-galactose 1-phosphate + ADP + H(+). It functions in the pathway carbohydrate metabolism; galactose metabolism. Its function is as follows. Catalyzes the transfer of the gamma-phosphate of ATP to D-galactose to form alpha-D-galactose-1-phosphate (Gal-1-P). The polypeptide is Galactokinase (Aliivibrio fischeri (strain MJ11) (Vibrio fischeri)).